Here is a 337-residue protein sequence, read N- to C-terminus: Ornithine carbamoyltransferase (337 aa).

Carbamoyl phosphate is bound by residues 57–60 (STRT), glutamine 84, arginine 108, and 135–138 (HPTQ). L-ornithine is bound by residues asparagine 167, aspartate 231, and 235-236 (SM). Carbamoyl phosphate-binding positions include 272 to 273 (CL) and arginine 317.

It belongs to the aspartate/ornithine carbamoyltransferase superfamily. OTCase family.

The protein localises to the cytoplasm. It catalyses the reaction carbamoyl phosphate + L-ornithine = L-citrulline + phosphate + H(+). The protein operates within amino-acid degradation; L-arginine degradation via ADI pathway; carbamoyl phosphate from L-arginine: step 2/2. Reversibly catalyzes the transfer of the carbamoyl group from carbamoyl phosphate (CP) to the N(epsilon) atom of ornithine (ORN) to produce L-citrulline. This Streptococcus equi subsp. equi (strain 4047) protein is Ornithine carbamoyltransferase.